The primary structure comprises 613 residues: Dihydroxy-acid dehydratase (613 aa).

Residue Asp-81 participates in Mg(2+) binding. Residue Cys-122 coordinates [2Fe-2S] cluster. Positions 123 and 124 each coordinate Mg(2+). At Lys-124 the chain carries N6-carboxylysine. Residue Cys-195 participates in [2Fe-2S] cluster binding. A Mg(2+)-binding site is contributed by Glu-491. The Proton acceptor role is filled by Ser-517.

Belongs to the IlvD/Edd family. As to quaternary structure, homodimer. It depends on [2Fe-2S] cluster as a cofactor. The cofactor is Mg(2+).

It catalyses the reaction (2R)-2,3-dihydroxy-3-methylbutanoate = 3-methyl-2-oxobutanoate + H2O. It carries out the reaction (2R,3R)-2,3-dihydroxy-3-methylpentanoate = (S)-3-methyl-2-oxopentanoate + H2O. The protein operates within amino-acid biosynthesis; L-isoleucine biosynthesis; L-isoleucine from 2-oxobutanoate: step 3/4. It participates in amino-acid biosynthesis; L-valine biosynthesis; L-valine from pyruvate: step 3/4. Functionally, functions in the biosynthesis of branched-chain amino acids. Catalyzes the dehydration of (2R,3R)-2,3-dihydroxy-3-methylpentanoate (2,3-dihydroxy-3-methylvalerate) into 2-oxo-3-methylpentanoate (2-oxo-3-methylvalerate) and of (2R)-2,3-dihydroxy-3-methylbutanoate (2,3-dihydroxyisovalerate) into 2-oxo-3-methylbutanoate (2-oxoisovalerate), the penultimate precursor to L-isoleucine and L-valine, respectively. The sequence is that of Dihydroxy-acid dehydratase from Photobacterium profundum (strain SS9).